Reading from the N-terminus, the 259-residue chain is Ribosomal RNA small subunit methyltransferase J (259 aa).

S-adenosyl-L-methionine is bound by residues 107–108 (RD), 123–124 (ER), 159–160 (SS), and D177.

Belongs to the methyltransferase superfamily. RsmJ family.

The protein resides in the cytoplasm. The enzyme catalyses guanosine(1516) in 16S rRNA + S-adenosyl-L-methionine = N(2)-methylguanosine(1516) in 16S rRNA + S-adenosyl-L-homocysteine + H(+). Specifically methylates the guanosine in position 1516 of 16S rRNA. This Shewanella loihica (strain ATCC BAA-1088 / PV-4) protein is Ribosomal RNA small subunit methyltransferase J.